The primary structure comprises 565 residues: DNA-directed RNA polymerase subunit beta C-terminal section (565 aa).

This sequence belongs to the RNA polymerase beta chain family. In terms of assembly, in plastids the minimal PEP RNA polymerase catalytic core is composed of four subunits: alpha, beta, beta', and beta''. When a (nuclear-encoded) sigma factor is associated with the core the holoenzyme is formed, which can initiate transcription.

The protein resides in the plastid. The protein localises to the chloroplast. It catalyses the reaction RNA(n) + a ribonucleoside 5'-triphosphate = RNA(n+1) + diphosphate. Its function is as follows. DNA-dependent RNA polymerase catalyzes the transcription of DNA into RNA using the four ribonucleoside triphosphates as substrates. The protein is DNA-directed RNA polymerase subunit beta C-terminal section (rpoB2) of Tetradesmus obliquus (Green alga).